The sequence spans 321 residues: Olfactory receptor 52N2 (321 aa).

Topologically, residues 1 to 27 (MSGDNSSSLTPGFFILNGVPGLEATHI) are extracellular. An N-linked (GlcNAc...) asparagine glycan is attached at Asn5. A helical membrane pass occupies residues 28 to 48 (WISLPFCFMYIIAVVGNCGLI). The Cytoplasmic portion of the chain corresponds to 49–56 (CLISHEEA). A helical membrane pass occupies residues 57–77 (LHRPMYYFLALLSFTDVTLCT). The Extracellular segment spans residues 78-101 (TMVPNMLCIFWFNLKEIDFNACLA). A disulfide bridge connects residues Cys99 and Cys191. Residues 102 to 122 (QMFFVHMLTGMESGVLMLMAL) form a helical membrane-spanning segment. The Cytoplasmic portion of the chain corresponds to 123–141 (DRYVAICYPLRYATILTNP). A helical membrane pass occupies residues 142 to 162 (VIAKAGLATFLRNVMLIIPFT). Residues 163–198 (LLTKRLPYCRGNFIPHTYCDHMSVAKVSCGNFKVNA) lie on the Extracellular side of the membrane. A helical transmembrane segment spans residues 199–219 (IYGLMVALLIGVFDICCISVS). Over 220–239 (YTMILQAVMSLSSADARHKA) the chain is Cytoplasmic. A helical membrane pass occupies residues 240 to 260 (FSTCTSHMCSIVITYVAAFFT). Over 261 to 276 (FFTHRFVGHNIPNHIH) the chain is Extracellular. The helical transmembrane segment at 277–297 (IIVANLYLLLPPTMNPIVYGV) threads the bilayer. The Cytoplasmic portion of the chain corresponds to 298-321 (KTKQIQEGVIKFLLGDKVSFTYDK).

The protein belongs to the G-protein coupled receptor 1 family.

It localises to the cell membrane. Its function is as follows. Odorant receptor. The polypeptide is Olfactory receptor 52N2 (OR52N2) (Homo sapiens (Human)).